The primary structure comprises 22 residues: ALPKKLKYLNLFNDGFNYMGVV.

Major component of a prophage tail tube. Functionally, antibacterial activity against Gram-negative bacterium E.amylovora. The protein is Bacteriocin serracin-P 23 kDa subunit of Serratia plymuthica.